The chain runs to 216 residues: Glycerol-3-phosphate acyltransferase (216 aa).

5 consecutive transmembrane segments (helical) span residues 4-24 (IALG…AILV), 56-76 (VAVL…AYLL), 80-100 (PLYL…PVFF), 112-132 (FGAI…TWLL), and 138-158 (GYSS…VWWF).

Belongs to the PlsY family. Probably interacts with PlsX.

The protein localises to the cell inner membrane. It catalyses the reaction an acyl phosphate + sn-glycerol 3-phosphate = a 1-acyl-sn-glycero-3-phosphate + phosphate. The protein operates within lipid metabolism; phospholipid metabolism. Catalyzes the transfer of an acyl group from acyl-phosphate (acyl-PO(4)) to glycerol-3-phosphate (G3P) to form lysophosphatidic acid (LPA). This enzyme utilizes acyl-phosphate as fatty acyl donor, but not acyl-CoA or acyl-ACP. The polypeptide is Glycerol-3-phosphate acyltransferase (Yersinia pseudotuberculosis serotype O:1b (strain IP 31758)).